A 466-amino-acid polypeptide reads, in one-letter code: Glutamate decarboxylase beta (466 aa).

Substrate is bound by residues threonine 62 and asparagine 83. Pyridoxal 5'-phosphate is bound by residues 126-127 (SS), threonine 212, and histidine 275. Lysine 276 is modified (N6-(pyridoxal phosphate)lysine). Lysine 446, lysine 453, and lysine 464 each carry N6-acetyllysine.

This sequence belongs to the group II decarboxylase family. As to quaternary structure, homohexamer composed of three dimers. It depends on pyridoxal 5'-phosphate as a cofactor.

It catalyses the reaction L-glutamate + H(+) = 4-aminobutanoate + CO2. Converts glutamate to gamma-aminobutyrate (GABA), consuming one intracellular proton in the reaction. The gad system helps to maintain a near-neutral intracellular pH when cells are exposed to extremely acidic conditions. The ability to survive transit through the acidic conditions of the stomach is essential for successful colonization of the mammalian host by commensal and pathogenic bacteria. The sequence is that of Glutamate decarboxylase beta (gadB) from Escherichia coli O6:H1 (strain CFT073 / ATCC 700928 / UPEC).